The primary structure comprises 61 residues: Insect toxin AaHIT5 (61 aa).

The LCN-type CS-alpha/beta domain occupies 1–61; that stretch reads DGYIKRHDGC…AWKSETNTCD (61 aa). 4 disulfides stabilise this stretch: Cys-10/Cys-60, Cys-14/Cys-35, Cys-21/Cys-42, and Cys-25/Cys-44.

As to expression, expressed by the venom gland.

Its subcellular location is the secreted. Functionally, excitatory insect toxins induce a spastic paralysis. They bind voltage-independently to sodium channels (Nav) and shift the voltage of activation toward more negative potentials thereby affecting sodium channel activation and promoting spontaneous and repetitive firing. This toxin elicits excitatory activity with no flaccid paralysis despite its high degree of sequence similarity with other depressant insect toxins. This toxin is active only on insects. This Androctonus australis (Sahara scorpion) protein is Insect toxin AaHIT5.